The following is a 189-amino-acid chain: Interferon alpha-D (189 aa).

An N-terminal signal peptide occupies residues 1-23; it reads MAPAWSLLLALLLLSCNAICSLG. 2 cysteine pairs are disulfide-bonded: Cys-24–Cys-122 and Cys-52–Cys-162.

It belongs to the alpha/beta interferon family.

Its subcellular location is the secreted. Functionally, produced by macrophages, IFN-alpha have antiviral activities. Interferon stimulates the production of two enzymes: a protein kinase and an oligoadenylate synthetase. This chain is Interferon alpha-D (IFNAD), found in Bos taurus (Bovine).